A 413-amino-acid polypeptide reads, in one-letter code: Serine hydroxymethyltransferase (413 aa).

Residues Leu119 and 123–125 (GHL) each bind (6S)-5,6,7,8-tetrahydrofolate. The residue at position 228 (Lys228) is an N6-(pyridoxal phosphate)lysine. 351-353 (SPF) serves as a coordination point for (6S)-5,6,7,8-tetrahydrofolate.

This sequence belongs to the SHMT family. Homodimer. It depends on pyridoxal 5'-phosphate as a cofactor.

The protein resides in the cytoplasm. The enzyme catalyses (6R)-5,10-methylene-5,6,7,8-tetrahydrofolate + glycine + H2O = (6S)-5,6,7,8-tetrahydrofolate + L-serine. Its pathway is one-carbon metabolism; tetrahydrofolate interconversion. It participates in amino-acid biosynthesis; glycine biosynthesis; glycine from L-serine: step 1/1. Functionally, catalyzes the reversible interconversion of serine and glycine with tetrahydrofolate (THF) serving as the one-carbon carrier. This reaction serves as the major source of one-carbon groups required for the biosynthesis of purines, thymidylate, methionine, and other important biomolecules. Also exhibits THF-independent aldolase activity toward beta-hydroxyamino acids, producing glycine and aldehydes, via a retro-aldol mechanism. The protein is Serine hydroxymethyltransferase of Clostridium botulinum (strain ATCC 19397 / Type A).